The primary structure comprises 409 residues: Nucleoprotein (409 aa).

Disordered regions lie at residues 1 to 32, 44 to 69, 121 to 145, 164 to 195, and 238 to 259; these read MASG…SSGN, LNSP…QQHG, ADVK…LRFS, RSGR…SEGD, and VDQV…DKMN. The span at 15–31 shows a compositional bias: low complexity; sequence PVIKLGGPKPPKVGSSG. Positions 29 to 160 are RNA-binding; the sequence is SSGNASWFQA…GNFRWDFIPL (132 aa). Residues 31–156 form the CoV N NTD domain; it reads GNASWFQAIK…GGPDGNFRWD (126 aa). Low complexity predominate over residues 164–179; it reads RSGRSTAASSAASSRA. Basic and acidic residues-rich tracts occupy residues 180–192 and 247–259; these read PSRD…RSGS and KGKE…DKMN. Ser190 and Ser192 each carry phosphoserine; by host. A CoV N CTD domain is found at 215–331; the sequence is TKAKADEMAH…QCVDGVGTRP (117 aa). The tract at residues 226–333 is dimerization; the sequence is RYCKRTIPPG…VDGVGTRPKD (108 aa). A disulfide bridge links Cys320 with Cys323. Residues 326 to 409 are disordered; the sequence is GVGTRPKDDE…GDSALGENEL (84 aa). Residues 341-358 show a composition bias toward low complexity; that stretch reads RSSSRPATRTSSPALRQQ. Basic and acidic residues predominate over residues 368–384; that stretch reads KQDDEVDKALTSDEERN. The residue at position 378 (Thr378) is a Phosphothreonine; by host. Ser379 carries the phosphoserine; by host modification.

This sequence belongs to the gammacoronavirus nucleocapsid protein family. Homooligomer. Both monomeric and oligomeric forms interact with RNA. Interacts with protein M. Interacts with NSP3; this interaction serves to tether the genome to the newly translated replicase-transcriptase complex at a very early stage of infection. Post-translationally, ADP-ribosylated. The ADP-ribosylation is retained in the virion during infection. Phosphorylated on serine and threonine residues.

The protein localises to the virion. It localises to the host endoplasmic reticulum-Golgi intermediate compartment. It is found in the host Golgi apparatus. Packages the positive strand viral genome RNA into a helical ribonucleocapsid (RNP) and plays a fundamental role during virion assembly through its interactions with the viral genome and membrane protein M. Plays an important role in enhancing the efficiency of subgenomic viral RNA transcription as well as viral replication. This is Nucleoprotein from Gallus gallus (Chicken).